The following is a 252-amino-acid chain: Phosphoglycolate phosphatase (252 aa).

Aspartate 13 (nucleophile) is an active-site residue. Mg(2+)-binding residues include aspartate 13, aspartate 15, and aspartate 192.

It belongs to the HAD-like hydrolase superfamily. CbbY/CbbZ/Gph/YieH family. Monomer. Requires Mg(2+) as cofactor. Chloride serves as cofactor.

It carries out the reaction 2-phosphoglycolate + H2O = glycolate + phosphate. It participates in organic acid metabolism; glycolate biosynthesis; glycolate from 2-phosphoglycolate: step 1/1. Specifically catalyzes the dephosphorylation of 2-phosphoglycolate. Is involved in the dissimilation of the intracellular 2-phosphoglycolate formed during the DNA repair of 3'-phosphoglycolate ends, a major class of DNA lesions induced by oxidative stress. This is Phosphoglycolate phosphatase from Salmonella choleraesuis (strain SC-B67).